A 384-amino-acid chain; its full sequence is Chorismate synthase (384 aa).

The NADP(+) site is built by Arg40 and Arg46. Residues 128–130 (RAS), Gly292, 307–311 (KPIPT), and Arg333 each bind FMN.

The protein belongs to the chorismate synthase family. In terms of assembly, homotetramer. Requires FMNH2 as cofactor.

It catalyses the reaction 5-O-(1-carboxyvinyl)-3-phosphoshikimate = chorismate + phosphate. The protein operates within metabolic intermediate biosynthesis; chorismate biosynthesis; chorismate from D-erythrose 4-phosphate and phosphoenolpyruvate: step 7/7. Its function is as follows. Catalyzes the anti-1,4-elimination of the C-3 phosphate and the C-6 proR hydrogen from 5-enolpyruvylshikimate-3-phosphate (EPSP) to yield chorismate, which is the branch point compound that serves as the starting substrate for the three terminal pathways of aromatic amino acid biosynthesis. This reaction introduces a second double bond into the aromatic ring system. The sequence is that of Chorismate synthase from Carboxydothermus hydrogenoformans (strain ATCC BAA-161 / DSM 6008 / Z-2901).